The primary structure comprises 365 residues: DNA replication and repair protein RecF (365 aa).

30 to 37 (GNNGMGKT) contributes to the ATP binding site.

This sequence belongs to the RecF family.

The protein localises to the cytoplasm. Functionally, the RecF protein is involved in DNA metabolism; it is required for DNA replication and normal SOS inducibility. RecF binds preferentially to single-stranded, linear DNA. It also seems to bind ATP. The polypeptide is DNA replication and repair protein RecF (Parabacteroides distasonis (strain ATCC 8503 / DSM 20701 / CIP 104284 / JCM 5825 / NCTC 11152)).